A 128-amino-acid chain; its full sequence is Phycoerythrin alpha-3 chain, chloroplastic (128 aa).

The transit peptide at 1–52 (MFAKTLASLAVIGSAAAYVPMMSMDMGRREVVQAGAAAAAVTPFLSGAPAGA) directs the protein to the chloroplast. Lys56 carries the 5-hydroxylysine modification. The interval 70 to 89 (GCSRAPKESTGGKAGGQDDE) is disordered. Residues Cys71, Arg73, 77 to 78 (ES), and Lys93 each bind 15,16-dihydrobiliverdin.

The protein belongs to the phycoerythrin family. As to quaternary structure, heterotetramer of 2 different alpha chains and 2 identical beta chains. The subunit composition could comprise of any combination of 2 out of 4 different alpha units with an invariant beta unit. In terms of processing, contains one covalently linked 15,16-dihydrobiliverdin chromophore.

Its subcellular location is the plastid. It is found in the chloroplast thylakoid membrane. In terms of biological role, light-harvesting photosynthetic tetrapyrrole chromophore-protein from the phycobiliprotein complex. This is Phycoerythrin alpha-3 chain, chloroplastic (cpeA3) from Rhodomonas sp. (strain CS 24) (Chroomonas sp. (strain CS24)).